The chain runs to 570 residues: Periplasmic trehalase (570 aa).

The first 34 residues, 1–34 (MIPPEIRRSVLLQKAIKLALAGTLLTFASFSATA), serve as a signal peptide directing secretion. Substrate-binding positions include arginine 159, 166 to 167 (WD), asparagine 203, 212 to 214 (HSQ), 284 to 286 (RPE), and glycine 317. Active-site proton donor/acceptor residues include aspartate 319 and glutamate 503. Position 518 (glutamate 518) interacts with substrate. Residues 544 to 570 (KPCDSVPSTRPASLSATPTKTPSAATQ) form a disordered region. The span at 554–570 (PASLSATPTKTPSAATQ) shows a compositional bias: low complexity.

The protein belongs to the glycosyl hydrolase 37 family. As to quaternary structure, monomer.

Its subcellular location is the periplasm. It carries out the reaction alpha,alpha-trehalose + H2O = alpha-D-glucose + beta-D-glucose. Functionally, provides the cells with the ability to utilize trehalose at high osmolarity by splitting it into glucose molecules that can subsequently be taken up by the phosphotransferase-mediated uptake system. In Salmonella paratyphi C (strain RKS4594), this protein is Periplasmic trehalase.